The following is a 104-amino-acid chain: L-rhamnose mutarotase (104 aa).

Tyr18 is a substrate binding site. His22 functions as the Proton donor in the catalytic mechanism. Substrate is bound by residues Tyr41 and 76–77 (WW).

This sequence belongs to the rhamnose mutarotase family. Homodimer.

It localises to the cytoplasm. The catalysed reaction is alpha-L-rhamnose = beta-L-rhamnose. It functions in the pathway carbohydrate metabolism; L-rhamnose metabolism. Functionally, involved in the anomeric conversion of L-rhamnose. In Burkholderia ambifaria (strain MC40-6), this protein is L-rhamnose mutarotase.